A 379-amino-acid chain; its full sequence is Cinnamyl alcohol dehydrogenase 7 (379 aa).

Over residues 1-13 (MAPTTTATAAAEQ) the composition is skewed to low complexity. The segment at 1–21 (MAPTTTATAAAEQAPPPQHTR) is disordered. Cysteine 60 serves as a coordination point for Zn(2+). Serine 62 is a binding site for NADP(+). Zn(2+) is bound by residues histidine 82, glutamate 83, cysteine 113, cysteine 116, cysteine 119, cysteine 127, and cysteine 185. NADP(+) is bound by residues threonine 189, 210-215 (GLGGLG), 233-238 (STSPVK), threonine 273, glycine 297, and 320-322 (SCM).

The protein belongs to the zinc-containing alcohol dehydrogenase family. As to quaternary structure, homodimer. The cofactor is Zn(2+). As to expression, expressed in roots, first internodes and panicles. Expressed in the vascular bundles and sclerenchyma cells below the epidermis in leaves and stems.

It carries out the reaction (E)-cinnamyl alcohol + NADP(+) = (E)-cinnamaldehyde + NADPH + H(+). The enzyme catalyses (E)-coniferol + NADP(+) = (E)-coniferaldehyde + NADPH + H(+). The catalysed reaction is (E)-sinapyl alcohol + NADP(+) = (E)-sinapaldehyde + NADPH + H(+). It catalyses the reaction (E)-4-coumaroyl alcohol + NADP(+) = (E)-4-coumaraldehyde + NADPH + H(+). It carries out the reaction (E)-caffeyl alcohol + NADP(+) = (E)-caffeyl aldehyde + NADPH + H(+). It participates in aromatic compound metabolism; phenylpropanoid biosynthesis. Its function is as follows. Involved in lignin biosynthesis. May catalyze the final step specific for the production of lignin monomers, like coniferyl alcohol, sinapyl alcohol and 4-coumaryl alcohol. This is Cinnamyl alcohol dehydrogenase 7 from Oryza sativa subsp. japonica (Rice).